A 178-amino-acid chain; its full sequence is Hypoxanthine phosphoribosyltransferase (178 aa).

Diphosphate contacts are provided by arginine 43 and glycine 44. Position 99 (glutamate 99) interacts with GMP. Residue glutamate 99 participates in IMP binding. Residues glutamate 99 and aspartate 100 each coordinate Mg(2+). Aspartate 103 acts as the Proton acceptor in catalysis. GMP contacts are provided by residues 103–108 (DSGNTL), lysine 131, and aspartate 159. IMP is bound by residues 103–108 (DSGNTL) and lysine 131. Arginine 165 serves as a coordination point for diphosphate.

The protein belongs to the purine/pyrimidine phosphoribosyltransferase family. In terms of assembly, homotetramer. Mg(2+) is required as a cofactor.

Its subcellular location is the cytoplasm. The catalysed reaction is IMP + diphosphate = hypoxanthine + 5-phospho-alpha-D-ribose 1-diphosphate. The enzyme catalyses GMP + diphosphate = guanine + 5-phospho-alpha-D-ribose 1-diphosphate. The protein operates within purine metabolism; IMP biosynthesis via salvage pathway; IMP from hypoxanthine: step 1/1. Its function is as follows. Purine salvage pathway enzyme which catalyzes the transfer of the ribosyl-5-phosphate group from 5-phospho-alpha-D-ribose 1-diphosphate (PRPP) to the N9 position of hypoxanthine to yield IMP (inosine 5'-monophosphate). To a lesser extent, can also act on guanine leading to GMP, but shows a highly less efficient activity with xanthine. This is Hypoxanthine phosphoribosyltransferase (hpt) from Salmonella typhimurium (strain LT2 / SGSC1412 / ATCC 700720).